Here is a 275-residue protein sequence, read N- to C-terminus: MDSYNYRDFAVGGGLLQRIRLVVSGSLHCGESDATLNDPKHLPARCVFQFSGPDNNSVTFPIEYVLRLMKNWARSQCDPYIRIQNTGVSVLFQGFFFAPPNAPMASITSEHNNVILKSTHTTGLALSGIERVKRGGGLDLRPLQAMMQISCFTRMPVVQLSFRFMGPEDASRTQRLLERATSFGAMELHQKRTVDSCDRSNGIVSPREHRECRERQKRRPTPKRCASEVFASLASISSAFASERVKRRPVRIAAAILAFVFVAVILAIATKGRLF.

Topologically, residues 1 to 251 (MDSYNYRDFA…SERVKRRPVR (251 aa)) are perinuclear space. The disordered stretch occupies residues 197–221 (CDRSNGIVSPREHRECRERQKRRPT). Residues 252-272 (IAAAILAFVFVAVILAIATKG) form a helical membrane-spanning segment. The Nuclear portion of the chain corresponds to 273–275 (RLF).

It belongs to the herpesviridae NEC2 protein family. As to quaternary structure, forms a heterohexameric complex with NEC1. Phosphorylated.

It is found in the host nucleus inner membrane. Plays an essential role in virion nuclear egress, the first step of virion release from infected cell. Within the host nucleus, NEC1 interacts with the newly formed capsid through the vertexes and directs it to the inner nuclear membrane by associating with NEC2. Induces the budding of the capsid at the inner nuclear membrane as well as its envelopment into the perinuclear space. There, the NEC1/NEC2 complex promotes the fusion of the enveloped capsid with the outer nuclear membrane and the subsequent release of the viral capsid into the cytoplasm where it will reach the secondary budding sites in the host Golgi or trans-Golgi network. The polypeptide is Nuclear egress protein 2 (Equus caballus (Horse)).